The chain runs to 406 residues: Peptidase T (406 aa).

His82 provides a ligand contact to Zn(2+). Asp84 is a catalytic residue. Zn(2+) is bound at residue Asp142. Glu176 functions as the Proton acceptor in the catalytic mechanism. Zn(2+)-binding residues include Glu177, Asp199, and His381.

This sequence belongs to the peptidase M20B family. Zn(2+) is required as a cofactor.

It is found in the cytoplasm. The catalysed reaction is Release of the N-terminal residue from a tripeptide.. Functionally, cleaves the N-terminal amino acid of tripeptides. The protein is Peptidase T of Streptococcus agalactiae serotype III (strain NEM316).